We begin with the raw amino-acid sequence, 502 residues long: ATP synthase subunit alpha (502 aa).

Position 169–176 (169–176 (GDRQTGKT)) interacts with ATP.

This sequence belongs to the ATPase alpha/beta chains family. As to quaternary structure, F-type ATPases have 2 components, CF(1) - the catalytic core - and CF(0) - the membrane proton channel. CF(1) has five subunits: alpha(3), beta(3), gamma(1), delta(1), epsilon(1). CF(0) has three main subunits: a(1), b(2) and c(9-12). The alpha and beta chains form an alternating ring which encloses part of the gamma chain. CF(1) is attached to CF(0) by a central stalk formed by the gamma and epsilon chains, while a peripheral stalk is formed by the delta and b chains.

It localises to the cell inner membrane. The enzyme catalyses ATP + H2O + 4 H(+)(in) = ADP + phosphate + 5 H(+)(out). Functionally, produces ATP from ADP in the presence of a proton gradient across the membrane. The alpha chain is a regulatory subunit. The sequence is that of ATP synthase subunit alpha from Geotalea uraniireducens (strain Rf4) (Geobacter uraniireducens).